We begin with the raw amino-acid sequence, 618 residues long: DNA mismatch repair protein MutL (618 aa).

Positions 366-378 (AEPTAAREPATPR) are enriched in low complexity. Residues 366–403 (AEPTAAREPATPRYSDGASGGNGGRQSAGGWPHAQPGY) are disordered. Residues 383-392 (ASGGNGGRQS) show a composition bias toward gly residues.

Belongs to the DNA mismatch repair MutL/HexB family.

In terms of biological role, this protein is involved in the repair of mismatches in DNA. It is required for dam-dependent methyl-directed DNA mismatch repair. May act as a 'molecular matchmaker', a protein that promotes the formation of a stable complex between two or more DNA-binding proteins in an ATP-dependent manner without itself being part of a final effector complex. This is DNA mismatch repair protein MutL from Salmonella typhi.